Here is a 349-residue protein sequence, read N- to C-terminus: uncharacterized protein (349 aa).

The N-terminal stretch at 1 to 16 (MLFKISFLALIASALA) is a signal peptide. Residues 17 to 326 (MSINSPTNGD…SSSSSSSAAS (310 aa)) lie on the Lumenal side of the membrane. Disordered stretches follow at residues 115–190 (ASSS…SSYR) and 243–322 (TNGT…SSSS). 3 stretches are compositionally biased toward low complexity: residues 116 to 176 (SSSS…SSRT), 243 to 278 (TNGTNSTNSTSTTSHSLTKLPTSSKSLTTSKTTASG), and 289 to 322 (STNDTTNTTDDATNTTSDSSSSSSASASSSSSSS). A helical transmembrane segment spans residues 327-347 (LVSQPVGISAVIAFFAVALSL). At 348–349 (TL) the chain is on the cytoplasmic side.

The protein resides in the endoplasmic reticulum membrane. This is an uncharacterized protein from Schizosaccharomyces pombe (strain 972 / ATCC 24843) (Fission yeast).